A 124-amino-acid chain; its full sequence is Probable glycine cleavage system H protein (124 aa).

One can recognise a Lipoyl-binding domain in the interval 23–104 (VATVGITDYA…PYKNWLVKIR (82 aa)). Residue Lys-64 is modified to N6-lipoyllysine.

The protein belongs to the GcvH family. As to quaternary structure, the glycine cleavage system is composed of four proteins: P, T, L and H. (R)-lipoate serves as cofactor.

In terms of biological role, the glycine cleavage system catalyzes the degradation of glycine. The H protein shuttles the methylamine group of glycine from the P protein to the T protein. The polypeptide is Probable glycine cleavage system H protein (Picrophilus torridus (strain ATCC 700027 / DSM 9790 / JCM 10055 / NBRC 100828 / KAW 2/3)).